A 474-amino-acid chain; its full sequence is Lactococcin A secretion protein LcnD (474 aa).

Topologically, residues 1-21 are cytoplasmic; that stretch reads MFDKKLLESSELYDKRYRNFS. The chain crosses the membrane as a helical span at residues 22–44; it reads TLIILPLFILLVGGVIFTFFAHK. The Extracellular portion of the chain corresponds to 45–474; the sequence is ELTVISTGSI…LDKIMGRGNQ (430 aa).

It belongs to the membrane fusion protein (MFP) (TC 8.A.1) family.

The protein localises to the cell membrane. Its function is as follows. Involved in the secretion of lactococcin A. In Lactococcus lactis subsp. cremoris (Streptococcus cremoris), this protein is Lactococcin A secretion protein LcnD (lcnD).